Consider the following 319-residue polypeptide: tRNA dimethylallyltransferase (319 aa).

11 to 18 (GPTCSGKS) provides a ligand contact to ATP. Position 13–18 (13–18 (TCSGKS)) interacts with substrate. Interaction with substrate tRNA regions lie at residues 36 to 39 (DSMQ) and 160 to 164 (QRIAR).

This sequence belongs to the IPP transferase family. As to quaternary structure, monomer. Requires Mg(2+) as cofactor.

The catalysed reaction is adenosine(37) in tRNA + dimethylallyl diphosphate = N(6)-dimethylallyladenosine(37) in tRNA + diphosphate. Functionally, catalyzes the transfer of a dimethylallyl group onto the adenine at position 37 in tRNAs that read codons beginning with uridine, leading to the formation of N6-(dimethylallyl)adenosine (i(6)A). The protein is tRNA dimethylallyltransferase of Granulibacter bethesdensis (strain ATCC BAA-1260 / CGDNIH1).